The following is a 284-amino-acid chain: MEMO1 family protein YN1551_0739 (284 aa).

It belongs to the MEMO1 family.

The sequence is that of MEMO1 family protein YN1551_0739 from Saccharolobus islandicus (strain Y.N.15.51 / Yellowstone #2) (Sulfolobus islandicus).